We begin with the raw amino-acid sequence, 211 residues long: Small ribosomal subunit protein uS3 (211 aa).

Residues 38–106 (LRKFIKKAFY…NIELNIIEVK (69 aa)) form the KH type-2 domain.

Belongs to the universal ribosomal protein uS3 family. In terms of assembly, part of the 30S ribosomal subunit. Forms a tight complex with proteins S10 and S14.

Binds the lower part of the 30S subunit head. Binds mRNA in the 70S ribosome, positioning it for translation. The polypeptide is Small ribosomal subunit protein uS3 (Ehrlichia chaffeensis (strain ATCC CRL-10679 / Arkansas)).